Consider the following 83-residue polypeptide: Defensin-like protein 194 (83 aa).

Positions 1 to 27 (MAMKSVSNFAIFLILFLVTSEISEIEA) are cleaved as a signal peptide. Intrachain disulfides connect Cys-32/Cys-78, Cys-44/Cys-68, Cys-53/Cys-73, and Cys-57/Cys-75.

This sequence belongs to the DEFL family. Protease inhibitor I18 (RTI/MTI-2) subfamily.

It is found in the secreted. The chain is Defensin-like protein 194 (ATTI3) from Arabidopsis thaliana (Mouse-ear cress).